We begin with the raw amino-acid sequence, 226 residues long: 2-C-methyl-D-erythritol 4-phosphate cytidylyltransferase (226 aa).

The protein belongs to the IspD/TarI cytidylyltransferase family. IspD subfamily.

The enzyme catalyses 2-C-methyl-D-erythritol 4-phosphate + CTP + H(+) = 4-CDP-2-C-methyl-D-erythritol + diphosphate. It functions in the pathway isoprenoid biosynthesis; isopentenyl diphosphate biosynthesis via DXP pathway; isopentenyl diphosphate from 1-deoxy-D-xylulose 5-phosphate: step 2/6. Functionally, catalyzes the formation of 4-diphosphocytidyl-2-C-methyl-D-erythritol from CTP and 2-C-methyl-D-erythritol 4-phosphate (MEP). In Trichodesmium erythraeum (strain IMS101), this protein is 2-C-methyl-D-erythritol 4-phosphate cytidylyltransferase.